Here is a 150-residue protein sequence, read N- to C-terminus: Transcription antitermination protein NusB (150 aa).

The protein belongs to the NusB family.

Involved in transcription antitermination. Required for transcription of ribosomal RNA (rRNA) genes. Binds specifically to the boxA antiterminator sequence of the ribosomal RNA (rrn) operons. The polypeptide is Transcription antitermination protein NusB (Streptococcus pyogenes serotype M4 (strain MGAS10750)).